The sequence spans 210 residues: Regulator of G-protein signaling 17 (210 aa).

The disordered stretch occupies residues 1–21; the sequence is MRKRQQSQNEGTPAVSQAPGN. In terms of domain architecture, RGS spans 84–200; that stretch reads NFDKMMKAPA…LNSQIYKSFV (117 aa). Phosphotyrosine is present on Tyr-137.

As to quaternary structure, interacts with GNAI1 and GNAQ. Interacts with GNAZ and GNAI2. Interacts with OPRM1. Forms a complex with mu-opioid receptors and G(alpha)z/i2 subunits, including GNAZ and GNAI2; the formation of this complex results in mu-opioid receptor desensitization. Interacts with HINT1. N- and O-glycosylated in synapsomal membranes. Post-translationally, serine phosphorylated in synapsomal membranes. In terms of processing, sumoylated with SUMO1 and SUM02 in synaptosomes. The sumoylated forms act as a scaffold for sequestering mu-opioid receptor-activated G(alpha) subunits. Desumoylated by HINT1. As to expression, predominantly expressed in the cerebellum. Also expressed in the cortex and medulla. Weakly expressed in a number of peripheral tissues notably spleen, lung and leukocytes.

It is found in the membrane. Its subcellular location is the synapse. The protein resides in the synaptosome. It localises to the nucleus. The protein localises to the cytoplasm. Its function is as follows. Regulates G protein-coupled receptor signaling cascades, including signaling via muscarinic acetylcholine receptor CHRM2 and dopamine receptor DRD2. Inhibits signal transduction by increasing the GTPase activity of G protein alpha subunits, thereby driving them into their inactive GDP-bound form. Binds selectively to GNAZ and GNAI2 subunits, accelerates their GTPase activity and regulates their signaling activities. Negatively regulates mu-opioid receptor-mediated activation of the G-proteins. This is Regulator of G-protein signaling 17 (RGS17) from Homo sapiens (Human).